Reading from the N-terminus, the 59-residue chain is uncharacterized protein (59 aa).

This is an uncharacterized protein from Archaeoglobus fulgidus (strain ATCC 49558 / DSM 4304 / JCM 9628 / NBRC 100126 / VC-16).